We begin with the raw amino-acid sequence, 472 residues long: Succinate-semialdehyde dehydrogenase [NADP(+)] (472 aa).

Residues 134-135 (WN), 158-161 (KHAS), and 210-211 (GS) contribute to the NADP(+) site. E232 (proton acceptor) is an active-site residue. L233 lines the NADP(+) pocket. C266 serves as the catalytic Nucleophile. Residue E363 coordinates NADP(+).

This sequence belongs to the aldehyde dehydrogenase family.

The enzyme catalyses succinate semialdehyde + NADP(+) + H2O = succinate + NADPH + 2 H(+). Catalyzes the NADP(+)-dependent oxidation of succinate semialdehyde to succinate. It is believed to be the main source of succinate semialdehyde dehydrogenase activity in Mycobacterium. This is Succinate-semialdehyde dehydrogenase [NADP(+)] (gabD1) from Mycolicibacterium paratuberculosis (strain ATCC BAA-968 / K-10) (Mycobacterium paratuberculosis).